Consider the following 343-residue polypeptide: Protein phosphatase 2C homolog 7, mitochondrial (343 aa).

Residues 1-39 (MFANVGFRTLRVSRGPLYGSCSQIISFSKRTFYSSAKSG) constitute a mitochondrion transit peptide. The region spanning 76 to 342 (IYQKLKDSIR…DDITVVVVRV (267 aa)) is the PPM-type phosphatase domain. 3 residues coordinate Mn(2+): aspartate 109, glycine 110, and aspartate 265.

Mg(2+) serves as cofactor. The cofactor is Mn(2+).

It localises to the mitochondrion. It catalyses the reaction O-phospho-L-seryl-[protein] + H2O = L-seryl-[protein] + phosphate. The enzyme catalyses O-phospho-L-threonyl-[protein] + H2O = L-threonyl-[protein] + phosphate. Its function is as follows. Protein phosphatase which positively regulates biosynthesis of the ubiquinone, coenzyme Q. Dephosphorylates and activates the ubiquinone biosynthesis protein CAT5/COQ7. Also dephosphorylates CIT1 on 'Ser-462', which leads to its activation. This chain is Protein phosphatase 2C homolog 7, mitochondrial (PTC7), found in Saccharomyces cerevisiae (strain ATCC 204508 / S288c) (Baker's yeast).